A 368-amino-acid chain; its full sequence is Glycolate oxidase 3 (368 aa).

Methionine 1 bears the N-acetylmethionine mark. The 359-residue stretch at methionine 1–aspartate 359 folds into the FMN hydroxy acid dehydrogenase domain. Tyrosine 24 is a glyoxylate binding site. FMN is bound by residues proline 77 to alanine 79, serine 106, glutamine 127 to tyrosine 129, and threonine 155. Tyrosine 129 provides a ligand contact to glyoxylate. Arginine 164 contacts glyoxylate. FMN-binding residues include lysine 230 and serine 252. Glyoxylate is bound by residues histidine 254 and arginine 257. The Proton acceptor role is filled by histidine 254. FMN contacts are provided by residues aspartate 285–arginine 289 and glycine 308–arginine 309.

The protein belongs to the FMN-dependent alpha-hydroxy acid dehydrogenase family. As to quaternary structure, homotetramer. It depends on FMN as a cofactor.

Its subcellular location is the peroxisome. It catalyses the reaction glycolate + O2 = glyoxylate + H2O2. It participates in photosynthesis; photorespiration; glycine from 2-phosphoglycolate: step 2/3. Its function is as follows. Catalyzes the oxidation of glycolate to glyoxylate, with a reduction of O2 to H2O2. Is a key enzyme in photorespiration in green plants. The chain is Glycolate oxidase 3 (GLO5) from Arabidopsis thaliana (Mouse-ear cress).